A 427-amino-acid chain; its full sequence is Enolase (427 aa).

Gln163 contacts (2R)-2-phosphoglycerate. Catalysis depends on Glu205, which acts as the Proton donor. 3 residues coordinate Mg(2+): Asp242, Glu288, and Asp315. Positions 340, 369, 370, and 391 each coordinate (2R)-2-phosphoglycerate. The active-site Proton acceptor is the Lys340.

This sequence belongs to the enolase family. It depends on Mg(2+) as a cofactor.

It localises to the cytoplasm. The protein resides in the secreted. Its subcellular location is the cell surface. The enzyme catalyses (2R)-2-phosphoglycerate = phosphoenolpyruvate + H2O. It participates in carbohydrate degradation; glycolysis; pyruvate from D-glyceraldehyde 3-phosphate: step 4/5. Functionally, catalyzes the reversible conversion of 2-phosphoglycerate (2-PG) into phosphoenolpyruvate (PEP). It is essential for the degradation of carbohydrates via glycolysis. This chain is Enolase, found in Cytophaga hutchinsonii (strain ATCC 33406 / DSM 1761 / CIP 103989 / NBRC 15051 / NCIMB 9469 / D465).